Reading from the N-terminus, the 882-residue chain is MPEIAQAHTPMMRQYLETKARYPDAILFFRLGDFYEMFFEDALTASEALQITLTARSKGDDKVPMCGVPYHAARGYVARLLEKGFKVAICDQVEEPGKSQLVKREVTRVVTPGMVLDDQVLDPREASWLGAVALEDGRAGLALLDASTGQLQCGEVDGDERLVDELRRAGVRELVFSSAADGARTDAIARAAGAPAARRDAAEFDRAEDRLRKHLGVPSLDGFGVSGLPLGLAAAAAALAYLADTQRATPRHVDRISRLSTDDVLLLDEATRTNLELERTLSGGRKKGTLLALLDRTVTAPGGRRLAEWLRYPLTDLARIGARLDAVEELTGAAVAREELALALRPVADLERLLSRLVLGQGNARDLRALAGALLALPALAGVLEARGAARLREAGARLRGLEALAAHLDAAVAEEPPATLREGGFIRRGHSAELDEIVAIAEDGKGWIAAMEAKERERTGIGSLKVRFNKVFGYYLEVTKPNLHLVPKDWERRQTTVGGERFVTPELKTFEEKVLTAEERRAALEERLFEALRQAVAAEAPRVRTAADAVATADALLSLSRVAAERGYVRPEVDASEALEIVDGRHPVVEAVLPDGPAAYVPNDVLVASRGAPECGEHGALLVITGPNMAGKSTVMRQAALVVLLAQMGAFVPARRARIGLVDRIFTRVGASDDLARGRSTFMVEMTETAAILHNATRRSLVVLDEIGRGTSTFDGVSIAWAVAEHLHDVTGCRTLFATHYHELQDLARERPAVRNLTVAVREVGDRVVFLRKLVQGGASRSYGIEVAKLAGLPAEVLARAREILKNLEAMEVDEGGHPALARGRRRRAGPSAAQLGLFGGGAPADPAAEDVAKAIRAIDLDALRPLDALNLLAGWKKSLE.

627-634 (GPNMAGKS) serves as a coordination point for ATP.

This sequence belongs to the DNA mismatch repair MutS family.

Its function is as follows. This protein is involved in the repair of mismatches in DNA. It is possible that it carries out the mismatch recognition step. This protein has a weak ATPase activity. In Anaeromyxobacter dehalogenans (strain 2CP-1 / ATCC BAA-258), this protein is DNA mismatch repair protein MutS.